The sequence spans 873 residues: Alanine--tRNA ligase (873 aa).

Positions 563, 567, 664, and 668 each coordinate Zn(2+).

Belongs to the class-II aminoacyl-tRNA synthetase family. Zn(2+) is required as a cofactor.

It is found in the cytoplasm. It carries out the reaction tRNA(Ala) + L-alanine + ATP = L-alanyl-tRNA(Ala) + AMP + diphosphate. Its function is as follows. Catalyzes the attachment of alanine to tRNA(Ala) in a two-step reaction: alanine is first activated by ATP to form Ala-AMP and then transferred to the acceptor end of tRNA(Ala). Also edits incorrectly charged Ser-tRNA(Ala) and Gly-tRNA(Ala) via its editing domain. This Aromatoleum aromaticum (strain DSM 19018 / LMG 30748 / EbN1) (Azoarcus sp. (strain EbN1)) protein is Alanine--tRNA ligase.